The following is a 294-amino-acid chain: MSNSNNVLKLGLPKGSLQDSTLELFANAGFHFSVQSRSYFPSIDDDELEAILIRAQEMARYVSQGAFDAGLTGKDWIIETDADVVEVADLVYSKASMRPVRWVLAVPESSPIQSVRDLEGKHIATEVVNITKKYLARNGVNASVEFSWGATEVKPPELADAIVEVTETGSSLRANKLRIVETILESNTKLIANKASWENPWKREKIENMAMLLQGAINAQGKVGLKMNAPKAGLNKLIESIPALRQPTISDLADNAWVAIEVIVDEKVVRHLIPDLKRAGAEGIFEYDINKLID.

The protein belongs to the ATP phosphoribosyltransferase family. Long subfamily. The cofactor is Mg(2+).

Its subcellular location is the cytoplasm. It carries out the reaction 1-(5-phospho-beta-D-ribosyl)-ATP + diphosphate = 5-phospho-alpha-D-ribose 1-diphosphate + ATP. It participates in amino-acid biosynthesis; L-histidine biosynthesis; L-histidine from 5-phospho-alpha-D-ribose 1-diphosphate: step 1/9. Feedback inhibited by histidine. Its function is as follows. Catalyzes the condensation of ATP and 5-phosphoribose 1-diphosphate to form N'-(5'-phosphoribosyl)-ATP (PR-ATP). Has a crucial role in the pathway because the rate of histidine biosynthesis seems to be controlled primarily by regulation of HisG enzymatic activity. The chain is ATP phosphoribosyltransferase from Chlorobaculum parvum (strain DSM 263 / NCIMB 8327) (Chlorobium vibrioforme subsp. thiosulfatophilum).